The primary structure comprises 447 residues: Serine/threonine-protein phosphatase 2A 55 kDa regulatory subunit B gamma isoform (447 aa).

WD repeat units lie at residues 22–61, 87–128, 171–209, 220–260, 279–317, 334–375, and 410–446; these read TEADIISTVEFNHTGELLATGDKGGRVVIFQREPESKNAP, EIEE…KRPE, GHTYHINSISVNSDCETYMSADDLRINLWHLAVTDRSFN, DLTE…LCDK, EIISSVSDVKFSHSGRYMLTRDYLTVKVWDLNMEARPIE, ENDC…DVTL, and DFTKKILHTAWHPAENIIAIAATNNLYIFQDKVNSDV.

It belongs to the phosphatase 2A regulatory subunit B family. In terms of assembly, PP2A consists of a common heterodimeric core enzyme, composed of a 36 kDa catalytic subunit (subunit C) and a 65 kDa constant regulatory subunit (PR65 or subunit A), that associates with a variety of regulatory subunits. Proteins that associate with the core dimer include three families of regulatory subunits B (the R2/B/PR55/B55, R3/B''/PR72/PR130/PR59 and R5/B'/B56 families), the 48 kDa variable regulatory subunit, viral proteins, and cell signaling molecules. Interacts with IER5. In terms of tissue distribution, highly expressed in brain.

Its function is as follows. The B regulatory subunit might modulate substrate selectivity and catalytic activity, and might also direct the localization of the catalytic enzyme to a particular subcellular compartment. The protein is Serine/threonine-protein phosphatase 2A 55 kDa regulatory subunit B gamma isoform (PPP2R2C) of Oryctolagus cuniculus (Rabbit).